Reading from the N-terminus, the 187-residue chain is MLSSLSPYMANPRNTLSQVLNFGLVLSSAFMVWKTLSVITNSTSPVVVVLSGSMEPAFQRGDLLFLWNRSPRVDVGEIVVYNVQGKDIPIVHRVMRVFPDVPTTGGKDVESVEASQKLLTKGDNNLSDDTELYAPGQEFLDRKTDLMGSVRGYVPAIGYVTIMLSEHPWLKSVLLGFMGLMVMLQRE.

Residues 1–14 are Cytoplasmic-facing; that stretch reads MLSSLSPYMANPRN. A helical; Signal-anchor for type II membrane protein transmembrane segment spans residues 15–33; that stretch reads TLSQVLNFGLVLSSAFMVW. Residues 34–187 are Lumenal-facing; it reads KTLSVITNST…MGLMVMLQRE (154 aa). N-linked (GlcNAc...) asparagine glycosylation is present at asparagine 41. Active-site charge relay system residues include serine 53 and histidine 92. Asparagine 125 is a glycosylation site (N-linked (GlcNAc...) asparagine). Aspartate 129 (charge relay system) is an active-site residue. The tract at residues 173–184 is C-terminal short (CTS) helix; sequence VLLGFMGLMVML.

It belongs to the peptidase S26B family. In terms of assembly, component of the signal peptidase complex (SPC) composed of a catalytic subunit SEC11 and three accessory subunits SPC1, SPC2 and SPC3. The complex induces a local thinning of the ER membrane which is used to measure the length of the signal peptide (SP) h-region of protein substrates. This ensures the selectivity of the complex towards h-regions shorter than 18-20 amino acids. SPC associates with the translocon complex.

The protein resides in the endoplasmic reticulum membrane. It catalyses the reaction Cleavage of hydrophobic, N-terminal signal or leader sequences from secreted and periplasmic proteins.. Its function is as follows. Catalytic component of the signal peptidase complex (SPC) which catalyzes the cleavage of N-terminal signal sequences from nascent proteins as they are translocated into the lumen of the endoplasmic reticulum. Specifically cleaves N-terminal signal peptides that contain a hydrophobic alpha-helix (h-region) shorter than 18-20 amino acids. The chain is Signal peptidase complex catalytic subunit SEC11 (SEC11) from Ajellomyces capsulatus (strain H88) (Darling's disease fungus).